A 569-amino-acid polypeptide reads, in one-letter code: Aspartic proteinase 3 (569 aa).

The first 21 residues, 1–21 (MKLKTVRSAVLSSLFASQVLG), serve as a signal peptide directing secretion. Positions 22–67 (KIIPAANKRDDDSNSKFVKLPFHKLYGDSLENVGSDKKPEVRLLKR) are excised as a propeptide. One can recognise a Peptidase A1 domain in the interval 83 to 475 (YSVDLEVGTP…DLENLEISMA (393 aa)). Asparagine 95 is a glycosylation site (N-linked (GlcNAc...) asparagine). The active site involves aspartate 101. N-linked (GlcNAc...) asparagine glycans are attached at residues asparagine 203, asparagine 232, asparagine 242, asparagine 245, asparagine 299, and asparagine 358. Aspartate 371 is a catalytic residue. N-linked (GlcNAc...) asparagine glycosylation is found at asparagine 480, asparagine 522, and asparagine 532. Asparagine 548 carries the GPI-anchor amidated asparagine lipid modification. The propeptide at 549–569 (VGDHIVPSLPLTLISLLFAFI) is removed in mature form.

Belongs to the peptidase A1 family. Consists of an alpha and a beta subunit, which are maintained together by a disulfide bond. The zymogen is transported to the periplasm, where the propeptide is removed and the enzyme is further subjected to an internal, autocatalytic cleavage to generate an alpha/beta two-subunit endopeptidase. The proteolytic processing at the cell surface is regulated by the environmental pH. Post-translationally, extensively N-glycosylated.

It localises to the cell membrane. The catalysed reaction is Hydrolyzes various precursor proteins with Arg or Lys in P1, and commonly Arg or Lys also in P2. The P3 amino acid is usually non-polar, but otherwise additional basic amino acids are favorable in both non-prime and prime positions.. Its function is as follows. Cleaves proteins C-terminally to mono- and paired-basic residues. Involved in the shedding of a subset of GPI-anchored plasma membrane proteins from the cell surface, including itself, GAS1 and MSB2. May also play a role in the maturation of GPI-mannoproteins associated with the cell wall. Can process the alpha-mating factor precursor. Required for cell wall integrity. The protein is Aspartic proteinase 3 (YPS1) of Saccharomyces cerevisiae (strain ATCC 204508 / S288c) (Baker's yeast).